Consider the following 389-residue polypeptide: Gibberellin 20 oxidase 2 (389 aa).

Residues 1–17 (MVAEHPTPPQPHQPPPM) are compositionally biased toward pro residues. The disordered stretch occupies residues 1–23 (MVAEHPTPPQPHQPPPMDSTAGS). Residues 224-324 (DSSSIMRCNY…RRSLAFFLCP (101 aa)) form the Fe2OG dioxygenase domain. The Fe cation site is built by histidine 249, aspartate 251, and histidine 305. Arginine 315 is a catalytic residue.

This sequence belongs to the iron/ascorbate-dependent oxidoreductase family. GA20OX subfamily. It depends on Fe cation as a cofactor. Requires L-ascorbate as cofactor.

The enzyme catalyses gibberellin A12 + 2 2-oxoglutarate + 3 O2 + H(+) = gibberellin A9 + 2 succinate + 3 CO2 + 2 H2O. It catalyses the reaction gibberellin A53 + 2 2-oxoglutarate + 3 O2 + H(+) = gibberellin A20 + 2 succinate + 3 CO2 + 2 H2O. Key oxidase enzyme in the biosynthesis of gibberellin that catalyzes the conversion of GA53 to GA20 via a three-step oxidation at C-20 of the GA skeleton. This is Gibberellin 20 oxidase 2 (20ox2) from Oryza sativa subsp. indica (Rice).